Consider the following 380-residue polypeptide: Actinidain (380 aa).

The N-terminal stretch at 1–24 is a signal peptide; the sequence is MGLPKSFVSMSLLFFSTLLILSLA. A propeptide spans 25–126 (activation peptide); that stretch reads FNAKNLTQRT…NQYEPRVGQV (102 aa). Intrachain disulfides connect Cys-148-Cys-191, Cys-182-Cys-224, and Cys-282-Cys-332. Cys-151 is an active-site residue. Cys-151 is a binding site for E64. Catalysis depends on residues His-288 and Asn-308.

It belongs to the peptidase C1 family. In terms of tissue distribution, fruit.

The enzyme catalyses Specificity close to that of papain.. Its activity is regulated as follows. Repressed by the active-site-directed cysteine protease inhibitor E64 (L-trans-epoxysuccinyl-leucylamide-(4-guanido)-butane) produced by Aspergillus japonicus. Its function is as follows. Cysteine protease responsible for the cleavage of kiwellin into kissper and KiTH. The polypeptide is Actinidain (Actinidia chinensis var. chinensis (Chinese soft-hair kiwi)).